A 159-amino-acid polypeptide reads, in one-letter code: SsrA-binding protein (159 aa).

The disordered stretch occupies residues 131–159 (KGKKLHDKRESEKERDWNRQKSRLLKDNG). Positions 137 to 159 (DKRESEKERDWNRQKSRLLKDNG) are enriched in basic and acidic residues.

It belongs to the SmpB family.

The protein resides in the cytoplasm. Required for rescue of stalled ribosomes mediated by trans-translation. Binds to transfer-messenger RNA (tmRNA), required for stable association of tmRNA with ribosomes. tmRNA and SmpB together mimic tRNA shape, replacing the anticodon stem-loop with SmpB. tmRNA is encoded by the ssrA gene; the 2 termini fold to resemble tRNA(Ala) and it encodes a 'tag peptide', a short internal open reading frame. During trans-translation Ala-aminoacylated tmRNA acts like a tRNA, entering the A-site of stalled ribosomes, displacing the stalled mRNA. The ribosome then switches to translate the ORF on the tmRNA; the nascent peptide is terminated with the 'tag peptide' encoded by the tmRNA and targeted for degradation. The ribosome is freed to recommence translation, which seems to be the essential function of trans-translation. This Rhizobium etli (strain CIAT 652) protein is SsrA-binding protein.